The chain runs to 87 residues: DNA-directed RNA polymerase subunit omega (87 aa).

Belongs to the RNA polymerase subunit omega family. In terms of assembly, the RNAP catalytic core consists of 2 alpha, 1 beta, 1 beta' and 1 omega subunit. When a sigma factor is associated with the core the holoenzyme is formed, which can initiate transcription.

It carries out the reaction RNA(n) + a ribonucleoside 5'-triphosphate = RNA(n+1) + diphosphate. In terms of biological role, promotes RNA polymerase assembly. Latches the N- and C-terminal regions of the beta' subunit thereby facilitating its interaction with the beta and alpha subunits. The protein is DNA-directed RNA polymerase subunit omega of Pseudomonas fluorescens (strain ATCC BAA-477 / NRRL B-23932 / Pf-5).